The following is a 259-amino-acid chain: Proteasome subunit alpha (259 aa).

The protein belongs to the peptidase T1A family. In terms of assembly, the 20S proteasome core is composed of 14 alpha and 14 beta subunits that assemble into four stacked heptameric rings, resulting in a barrel-shaped structure. The two inner rings, each composed of seven catalytic beta subunits, are sandwiched by two outer rings, each composed of seven alpha subunits. The catalytic chamber with the active sites is on the inside of the barrel. Has a gated structure, the ends of the cylinder being occluded by the N-termini of the alpha-subunits. Is capped at one or both ends by the proteasome regulatory ATPase, PAN.

It localises to the cytoplasm. The formation of the proteasomal ATPase PAN-20S proteasome complex, via the docking of the C-termini of PAN into the intersubunit pockets in the alpha-rings, triggers opening of the gate for substrate entry. Interconversion between the open-gate and close-gate conformations leads to a dynamic regulation of the 20S proteasome proteolysis activity. In terms of biological role, component of the proteasome core, a large protease complex with broad specificity involved in protein degradation. The polypeptide is Proteasome subunit alpha (Methanococcus vannielii (strain ATCC 35089 / DSM 1224 / JCM 13029 / OCM 148 / SB)).